The following is a 128-amino-acid chain: Sulfurtransferase TusD (128 aa).

Catalysis depends on Cys78, which acts as the Cysteine persulfide intermediate.

The protein belongs to the DsrE/TusD family. In terms of assembly, heterohexamer, formed by a dimer of trimers. The hexameric TusBCD complex contains 2 copies each of TusB, TusC and TusD. The TusBCD complex interacts with TusE.

It localises to the cytoplasm. Part of a sulfur-relay system required for 2-thiolation of 5-methylaminomethyl-2-thiouridine (mnm(5)s(2)U) at tRNA wobble positions. Accepts sulfur from TusA and transfers it in turn to TusE. This chain is Sulfurtransferase TusD, found in Salmonella arizonae (strain ATCC BAA-731 / CDC346-86 / RSK2980).